The following is a 159-amino-acid chain: Ribosomal RNA large subunit methyltransferase H (159 aa).

S-adenosyl-L-methionine-binding positions include Leu-76, Gly-108, and 127–132 (FGLLTL).

It belongs to the RNA methyltransferase RlmH family. In terms of assembly, homodimer.

The protein resides in the cytoplasm. The enzyme catalyses pseudouridine(1915) in 23S rRNA + S-adenosyl-L-methionine = N(3)-methylpseudouridine(1915) in 23S rRNA + S-adenosyl-L-homocysteine + H(+). Functionally, specifically methylates the pseudouridine at position 1915 (m3Psi1915) in 23S rRNA. The chain is Ribosomal RNA large subunit methyltransferase H from Streptococcus pyogenes serotype M6 (strain ATCC BAA-946 / MGAS10394).